The primary structure comprises 185 residues: Elongation factor P (185 aa).

The protein belongs to the elongation factor P family.

It is found in the cytoplasm. It functions in the pathway protein biosynthesis; polypeptide chain elongation. In terms of biological role, involved in peptide bond synthesis. Stimulates efficient translation and peptide-bond synthesis on native or reconstituted 70S ribosomes in vitro. Probably functions indirectly by altering the affinity of the ribosome for aminoacyl-tRNA, thus increasing their reactivity as acceptors for peptidyl transferase. This Pseudothermotoga lettingae (strain ATCC BAA-301 / DSM 14385 / NBRC 107922 / TMO) (Thermotoga lettingae) protein is Elongation factor P.